The chain runs to 359 residues: Peptide chain release factor 1 (359 aa).

N5-methylglutamine is present on Gln236.

This sequence belongs to the prokaryotic/mitochondrial release factor family. In terms of processing, methylated by PrmC. Methylation increases the termination efficiency of RF1.

It localises to the cytoplasm. Functionally, peptide chain release factor 1 directs the termination of translation in response to the peptide chain termination codons UAG and UAA. This is Peptide chain release factor 1 from Streptococcus pneumoniae serotype 2 (strain D39 / NCTC 7466).